The following is a 413-amino-acid chain: Aspartate aminotransferase, cytoplasmic (413 aa).

Residues G39 and W141 each contribute to the L-aspartate site. S149 is modified (phosphoserine). N195 is a binding site for L-aspartate. N6-(pyridoxal phosphate)lysine is present on K259. An N6-succinyllysine modification is found at K318. An L-aspartate-binding site is contributed by R387.

The protein belongs to the class-I pyridoxal-phosphate-dependent aminotransferase family. Homodimer. Pyridoxal 5'-phosphate serves as cofactor. In terms of tissue distribution, expressed in neurons of the retina. Localizes to the inner and outer plexiform layers, the inner and outer nuclear layer and the outer segments of photoreceptors.

The protein localises to the cytoplasm. It carries out the reaction L-aspartate + 2-oxoglutarate = oxaloacetate + L-glutamate. It catalyses the reaction L-cysteine + 2-oxoglutarate = 2-oxo-3-sulfanylpropanoate + L-glutamate. The catalysed reaction is (2S)-2-aminobutanoate + 2-oxoglutarate = 2-oxobutanoate + L-glutamate. The enzyme catalyses 3-sulfino-L-alanine + 2-oxoglutarate = 3-sulfinopyruvate + L-glutamate. With respect to regulation, inhibited by calcium ions. In terms of biological role, biosynthesis of L-glutamate from L-aspartate or L-cysteine. Important regulator of levels of glutamate, the major excitatory neurotransmitter of the vertebrate central nervous system. Acts as a scavenger of glutamate in brain neuroprotection. The aspartate aminotransferase activity is involved in hepatic glucose synthesis during development and in adipocyte glyceroneogenesis. Using L-cysteine as substrate, regulates levels of mercaptopyruvate, an important source of hydrogen sulfide. Mercaptopyruvate is converted into H(2)S via the action of 3-mercaptopyruvate sulfurtransferase (3MST). Hydrogen sulfide is an important synaptic modulator and neuroprotectant in the brain. In Mus musculus (Mouse), this protein is Aspartate aminotransferase, cytoplasmic.